A 204-amino-acid polypeptide reads, in one-letter code: ATP-dependent Clp protease proteolytic subunit 1 (204 aa).

The active-site Nucleophile is Ser97. His122 is an active-site residue.

It belongs to the peptidase S14 family. In terms of assembly, fourteen ClpP subunits assemble into 2 heptameric rings which stack back to back to give a disk-like structure with a central cavity, resembling the structure of eukaryotic proteasomes.

Its subcellular location is the cytoplasm. It catalyses the reaction Hydrolysis of proteins to small peptides in the presence of ATP and magnesium. alpha-casein is the usual test substrate. In the absence of ATP, only oligopeptides shorter than five residues are hydrolyzed (such as succinyl-Leu-Tyr-|-NHMec, and Leu-Tyr-Leu-|-Tyr-Trp, in which cleavage of the -Tyr-|-Leu- and -Tyr-|-Trp bonds also occurs).. Functionally, cleaves peptides in various proteins in a process that requires ATP hydrolysis. Has a chymotrypsin-like activity. Plays a major role in the degradation of misfolded proteins. The polypeptide is ATP-dependent Clp protease proteolytic subunit 1 (Trichormus variabilis (strain ATCC 29413 / PCC 7937) (Anabaena variabilis)).